The chain runs to 386 residues: Synaptotagmin-5 (386 aa).

The span at 1–16 (MFPEPPTLGSPAPKTP) shows a compositional bias: pro residues. The tract at residues 1-21 (MFPEPPTLGSPAPKTPPDSSR) is disordered. The Vesicular segment spans residues 1–24 (MFPEPPTLGSPAPKTPPDSSRIRQ). Residues 25 to 45 (GAVPAWVLATIVLGSGLLVFS) form a helical membrane-spanning segment. Residues 46-386 (SCFCLYRKRC…PDRARPIPAP (341 aa)) lie on the Cytoplasmic side of the membrane. C2 domains follow at residues 108 to 227 (QLGR…QAWR) and 239 to 372 (KLGD…AQWH). Leucine 138, aspartate 139, aspartate 145, aspartate 197, phenylalanine 198, aspartate 199, serine 202, aspartate 205, aspartate 270, aspartate 276, aspartate 330, and aspartate 332 together coordinate Ca(2+).

This sequence belongs to the synaptotagmin family. In terms of assembly, homodimer. Interacts with both alpha- and beta-tubulin. The cofactor is Ca(2+).

It is found in the cytoplasmic vesicle. Its subcellular location is the secretory vesicle. The protein resides in the synaptic vesicle membrane. The protein localises to the recycling endosome membrane. May be involved in Ca(2+)-dependent exocytosis of secretory vesicles through Ca(2+) and phospholipid binding to the C2 domain or may serve as Ca(2+) sensors in the process of vesicular trafficking and exocytosis. Regulates the Ca(2+)-dependent secretion of norepinephrine in PC12 cells. Required for export from the endocytic recycling compartment to the cell surface. This Mus musculus (Mouse) protein is Synaptotagmin-5 (Syt5).